The primary structure comprises 336 residues: Ribosomal RNA large subunit methyltransferase F (336 aa).

The protein belongs to the methyltransferase superfamily. METTL16/RlmF family.

It is found in the cytoplasm. The enzyme catalyses adenosine(1618) in 23S rRNA + S-adenosyl-L-methionine = N(6)-methyladenosine(1618) in 23S rRNA + S-adenosyl-L-homocysteine + H(+). Specifically methylates the adenine in position 1618 of 23S rRNA. This Serratia proteamaculans (strain 568) protein is Ribosomal RNA large subunit methyltransferase F.